Consider the following 660-residue polypeptide: Acetyl-coenzyme A synthetase (660 aa).

CoA is bound by residues 197-200 (RGGK) and T317. Residues 397–399 (GEP), 421–426 (DTFWQT), D512, and R528 contribute to the ATP site. S536 provides a ligand contact to CoA. R539 lines the ATP pocket. Positions 550 and 555 each coordinate Mg(2+). At K625 the chain carries N6-acetyllysine.

This sequence belongs to the ATP-dependent AMP-binding enzyme family. Mg(2+) serves as cofactor. Post-translationally, acetylated. Deacetylation by the SIR2-homolog deacetylase activates the enzyme.

It carries out the reaction acetate + ATP + CoA = acetyl-CoA + AMP + diphosphate. Functionally, catalyzes the conversion of acetate into acetyl-CoA (AcCoA), an essential intermediate at the junction of anabolic and catabolic pathways. AcsA undergoes a two-step reaction. In the first half reaction, AcsA combines acetate with ATP to form acetyl-adenylate (AcAMP) intermediate. In the second half reaction, it can then transfer the acetyl group from AcAMP to the sulfhydryl group of CoA, forming the product AcCoA. This Cupriavidus taiwanensis (strain DSM 17343 / BCRC 17206 / CCUG 44338 / CIP 107171 / LMG 19424 / R1) (Ralstonia taiwanensis (strain LMG 19424)) protein is Acetyl-coenzyme A synthetase.